The primary structure comprises 432 residues: MTTSSNRQSSDALYQDALTHIVGGVNSPSRSFKAVGGGAPVYMERGEGAYFYDVDGNRYIDYLAAYGPIITGHAHPHIHEALMNASSKGLLYGTPHRLEVEFAKKLKQAIPSMDKVRFTNSGTEAVMTTVRVARAYTGRELVVKFSGCYHGHSDLMLIAAGSGPATLGSPDSAGVTKATAKEVITVPFNDVEAYREMMKEWGDQVACVLVEPIVGNFGIVEPKPGFLQAVNDITHEHGALVIYDEVITAFRFTYGSAQQVYGIEPDMTALGKIIGGGLPIGAYGGKAEIMETVAPLGPAYQAGTMAGNPASMATGIACLEVLEQPGVYEKLDALGAKLEAGIREAAEKHDVTITLNRLKGALTVYFTDEIVTDYEGAEKSDGEKFGRFFKLMLENGVNLAPSKYEAWFLTTEHTEQDIEETIEAVNRSFAQL.

Lys272 is subject to N6-(pyridoxal phosphate)lysine.

Belongs to the class-III pyridoxal-phosphate-dependent aminotransferase family. HemL subfamily. In terms of assembly, homodimer. Requires pyridoxal 5'-phosphate as cofactor.

The protein resides in the cytoplasm. The enzyme catalyses (S)-4-amino-5-oxopentanoate = 5-aminolevulinate. The protein operates within porphyrin-containing compound metabolism; protoporphyrin-IX biosynthesis; 5-aminolevulinate from L-glutamyl-tRNA(Glu): step 2/2. This chain is Glutamate-1-semialdehyde 2,1-aminomutase 1, found in Exiguobacterium sp. (strain ATCC BAA-1283 / AT1b).